Here is a 267-residue protein sequence, read N- to C-terminus: 4-hydroxy-tetrahydrodipicolinate reductase (267 aa).

Residues 8–13 and D34 each bind NAD(+); that span reads GAAGRM. R35 lines the NADP(+) pocket. Residues 98–100 and 122–125 contribute to the NAD(+) site; these read GTT and AANF. Residue H155 is the Proton donor/acceptor of the active site. H156 contacts (S)-2,3,4,5-tetrahydrodipicolinate. The active-site Proton donor is K159. 165-166 contributes to the (S)-2,3,4,5-tetrahydrodipicolinate binding site; the sequence is GT.

It belongs to the DapB family.

Its subcellular location is the cytoplasm. The enzyme catalyses (S)-2,3,4,5-tetrahydrodipicolinate + NAD(+) + H2O = (2S,4S)-4-hydroxy-2,3,4,5-tetrahydrodipicolinate + NADH + H(+). The catalysed reaction is (S)-2,3,4,5-tetrahydrodipicolinate + NADP(+) + H2O = (2S,4S)-4-hydroxy-2,3,4,5-tetrahydrodipicolinate + NADPH + H(+). It functions in the pathway amino-acid biosynthesis; L-lysine biosynthesis via DAP pathway; (S)-tetrahydrodipicolinate from L-aspartate: step 4/4. In terms of biological role, catalyzes the conversion of 4-hydroxy-tetrahydrodipicolinate (HTPA) to tetrahydrodipicolinate. The protein is 4-hydroxy-tetrahydrodipicolinate reductase of Pseudomonas savastanoi pv. phaseolicola (strain 1448A / Race 6) (Pseudomonas syringae pv. phaseolicola (strain 1448A / Race 6)).